Consider the following 459-residue polypeptide: Ribulose bisphosphate carboxylase large chain (459 aa).

Lys4 bears the N6,N6,N6-trimethyllysine mark. Substrate is bound by residues Asn113 and Thr163. Catalysis depends on Lys165, which acts as the Proton acceptor. Residue Lys167 coordinates substrate. Mg(2+) contacts are provided by Lys191, Asp193, and Glu194. N6-carboxylysine is present on Lys191. Catalysis depends on His284, which acts as the Proton acceptor. Positions 285, 317, and 369 each coordinate substrate.

Belongs to the RuBisCO large chain family. Type I subfamily. In terms of assembly, heterohexadecamer of 8 large chains and 8 small chains; disulfide-linked. The disulfide link is formed within the large subunit homodimers. Mg(2+) serves as cofactor. In terms of processing, the disulfide bond which can form in the large chain dimeric partners within the hexadecamer appears to be associated with oxidative stress and protein turnover.

Its subcellular location is the plastid. The protein resides in the chloroplast. It catalyses the reaction 2 (2R)-3-phosphoglycerate + 2 H(+) = D-ribulose 1,5-bisphosphate + CO2 + H2O. The enzyme catalyses D-ribulose 1,5-bisphosphate + O2 = 2-phosphoglycolate + (2R)-3-phosphoglycerate + 2 H(+). Functionally, ruBisCO catalyzes two reactions: the carboxylation of D-ribulose 1,5-bisphosphate, the primary event in carbon dioxide fixation, as well as the oxidative fragmentation of the pentose substrate in the photorespiration process. Both reactions occur simultaneously and in competition at the same active site. In Parnassia fimbriata (Fringed grass-of-Parnassus), this protein is Ribulose bisphosphate carboxylase large chain.